A 304-amino-acid chain; its full sequence is Oxidoreductase calM (304 aa).

Positions 26, 45, 68, and 98 each coordinate NADP(+). Ser-152 serves as the catalytic Proton donor. Residues Tyr-166, Lys-170, Val-200, and Thr-202 each coordinate NADP(+). The Proton acceptor role is filled by Tyr-166. Lys-170 functions as the Lowers pKa of active site Tyr in the catalytic mechanism.

It belongs to the short-chain dehydrogenases/reductases (SDR) family.

The protein operates within secondary metabolite biosynthesis. Oxidoreductase; part of the gene cluster that mediates the biosynthesis of calbistrin A and related compounds. Calbistrin A is a secondary metabolite with an interesting structure that was recently found to have bioactivity against leukemia cells. It consists of two polyketides linked by an ester bond: a bicyclic decalin containing polyketide and a linear 12 carbon dioic acid structure. The polyketide synthase calA is probably responsible for forming the decalin moiety. Because calA lacks a designated enoylreductase (ER) domain, the required activity is provided by the trans-enoyl reductase calK. Following release from the PKS, calF then probably catalyzes the oxidation and the subsequent Diels Alder cycloisomerization that lead to the formation of the decalin moiety. The decalin polyketide backbone includes two C-methyl groups, at C7 and C11 in backbone, of which the C7 position is probably methylated by the methyltransferase domain of calA. A candidate for adding the methyl group at C11, if not done by CalA, is the cluster methyltransferase calH. Several additional tailoring enzymes within the cluster could be involved in the modification of the decalin polyketide product. Those include the 3 cytochrome P450 monooxygenases CalE, CalG and CalL, of which one might be responsible for the introduction of the extra hydroxyl group attached to the backbone of the decalin moiety, at position C9 in the backbone, that allows for attachment of the linear moiety. One tailoring enzyme activity that is expected to be involved in biosynthesis of calbistrin is an acyltransferase for connecting the two polyketide synthase products, and which could be performed by the cluster acyltransferase calJ. The enzyme responsible for the biosynthesis of the linear moiety, probably a second PKS, has not been identified yet. The polypeptide is Oxidoreductase calM (Penicillium decumbens).